We begin with the raw amino-acid sequence, 511 residues long: Maturase K (511 aa).

This sequence belongs to the intron maturase 2 family. MatK subfamily.

The protein resides in the plastid. The protein localises to the chloroplast. Usually encoded in the trnK tRNA gene intron. Probably assists in splicing its own and other chloroplast group II introns. This Hordeum vulgare subsp. spontaneum (Wild barley) protein is Maturase K.